The chain runs to 349 residues: Isopentenyl-diphosphate delta-isomerase (349 aa).

Substrate is bound at residue 5–6 (RK). FMN contacts are provided by residues Ser61, 62 to 64 (SMT), Ser92, and Asn120. Position 92-94 (92-94 (SMR)) interacts with substrate. Residue Gln159 coordinates substrate. Glu160 serves as a coordination point for Mg(2+). FMN-binding positions include Lys189, Thr219, 269-271 (GLR), and 290-291 (AR).

The protein belongs to the IPP isomerase type 2 family. As to quaternary structure, homooctamer. Dimer of tetramers. Requires FMN as cofactor. NADPH is required as a cofactor. Mg(2+) serves as cofactor.

It is found in the cytoplasm. The catalysed reaction is isopentenyl diphosphate = dimethylallyl diphosphate. Its function is as follows. Involved in the biosynthesis of isoprenoids. Catalyzes the 1,3-allylic rearrangement of the homoallylic substrate isopentenyl (IPP) to its allylic isomer, dimethylallyl diphosphate (DMAPP). This chain is Isopentenyl-diphosphate delta-isomerase, found in Picrophilus torridus (strain ATCC 700027 / DSM 9790 / JCM 10055 / NBRC 100828 / KAW 2/3).